Here is a 427-residue protein sequence, read N- to C-terminus: Trigger factor (427 aa).

The PPIase FKBP-type domain maps to 160–240; the sequence is TDTVIGDVVK…VKEVKRLELP (81 aa).

The protein belongs to the FKBP-type PPIase family. Tig subfamily.

The protein localises to the cytoplasm. The catalysed reaction is [protein]-peptidylproline (omega=180) = [protein]-peptidylproline (omega=0). Its function is as follows. Involved in protein export. Acts as a chaperone by maintaining the newly synthesized protein in an open conformation. Functions as a peptidyl-prolyl cis-trans isomerase. This is Trigger factor from Chlorobium limicola (strain DSM 245 / NBRC 103803 / 6330).